A 151-amino-acid chain; its full sequence is Chaperonin GroEL (151 aa).

Residue 41–45 (DGTTT) participates in ATP binding.

Belongs to the chaperonin (HSP60) family. As to quaternary structure, forms a cylinder of 14 subunits composed of two heptameric rings stacked back-to-back. Interacts with the co-chaperonin GroES.

Its subcellular location is the cytoplasm. It carries out the reaction ATP + H2O + a folded polypeptide = ADP + phosphate + an unfolded polypeptide.. Its function is as follows. Together with its co-chaperonin GroES, plays an essential role in assisting protein folding. The GroEL-GroES system forms a nano-cage that allows encapsulation of the non-native substrate proteins and provides a physical environment optimized to promote and accelerate protein folding. The polypeptide is Chaperonin GroEL (Mycolicibacterium fortuitum (Mycobacterium fortuitum)).